Reading from the N-terminus, the 330-residue chain is DNA-directed RNA polymerase subunit alpha (330 aa).

The interval 1-236 (MQGSVTEFLK…EQLDAFVDLR (236 aa)) is alpha N-terminal domain (alpha-NTD). The segment at 250-330 (FDPILLRPVD…NWPPASIAED (81 aa)) is alpha C-terminal domain (alpha-CTD).

This sequence belongs to the RNA polymerase alpha chain family. As to quaternary structure, homodimer. The RNAP catalytic core consists of 2 alpha, 1 beta, 1 beta' and 1 omega subunit. When a sigma factor is associated with the core the holoenzyme is formed, which can initiate transcription.

It catalyses the reaction RNA(n) + a ribonucleoside 5'-triphosphate = RNA(n+1) + diphosphate. Its function is as follows. DNA-dependent RNA polymerase catalyzes the transcription of DNA into RNA using the four ribonucleoside triphosphates as substrates. This Vibrio campbellii (strain ATCC BAA-1116) protein is DNA-directed RNA polymerase subunit alpha.